We begin with the raw amino-acid sequence, 351 residues long: Histidinol-phosphate aminotransferase (351 aa).

N6-(pyridoxal phosphate)lysine is present on lysine 213.

This sequence belongs to the class-II pyridoxal-phosphate-dependent aminotransferase family. Histidinol-phosphate aminotransferase subfamily. As to quaternary structure, homodimer. Pyridoxal 5'-phosphate serves as cofactor.

It carries out the reaction L-histidinol phosphate + 2-oxoglutarate = 3-(imidazol-4-yl)-2-oxopropyl phosphate + L-glutamate. The protein operates within amino-acid biosynthesis; L-histidine biosynthesis; L-histidine from 5-phospho-alpha-D-ribose 1-diphosphate: step 7/9. The protein is Histidinol-phosphate aminotransferase of Thermoanaerobacter sp. (strain X514).